Consider the following 552-residue polypeptide: Arginine--tRNA ligase (552 aa).

Positions 130 to 140 (ANPTGPIHLGG) match the 'HIGH' region motif.

The protein belongs to the class-I aminoacyl-tRNA synthetase family. As to quaternary structure, monomer.

It is found in the cytoplasm. It carries out the reaction tRNA(Arg) + L-arginine + ATP = L-arginyl-tRNA(Arg) + AMP + diphosphate. In Nocardia farcinica (strain IFM 10152), this protein is Arginine--tRNA ligase.